The chain runs to 484 residues: Dual specificity protein kinase CLK1 (484 aa).

The interval 1–42 (MRHSKRTYCPDWDDKDWDYGKWRSSSSHKRRKRSHSSAQENK) is disordered. Basic residues predominate over residues 26-35 (SSHKRRKRSH). Ser61 carries the phosphoserine modification. Positions 79–146 (DYTQGCEPGH…RTRSVEDDEE (68 aa)) are disordered. Over residues 86-97 (PGHRQRDHESRY) the composition is skewed to basic and acidic residues. Over residues 100–112 (HSSKSSGRSGRSS) the composition is skewed to low complexity. The span at 113 to 138 (YKSKHRIHHSTSHRRSHGKSHRRKRT) shows a compositional bias: basic residues. At Thr138 the chain carries Phosphothreonine. Ser140 bears the Phosphoserine mark. The region spanning 161 to 477 (YEIVDTLGEG…LREALKHPFF (317 aa)) is the Protein kinase domain. Residues 167–175 (LGEGAFGKV) and Lys191 each bind ATP. Catalysis depends on Asp288, which acts as the Proton acceptor.

The protein belongs to the protein kinase superfamily. CMGC Ser/Thr protein kinase family. Lammer subfamily. As to quaternary structure, interacts with PPIG and UBL5. Autophosphorylates on all three types of residues. As to expression, endothelial cells.

Its subcellular location is the nucleus. It catalyses the reaction L-seryl-[protein] + ATP = O-phospho-L-seryl-[protein] + ADP + H(+). It carries out the reaction L-threonyl-[protein] + ATP = O-phospho-L-threonyl-[protein] + ADP + H(+). The catalysed reaction is L-tyrosyl-[protein] + ATP = O-phospho-L-tyrosyl-[protein] + ADP + H(+). With respect to regulation, regulates splicing of its own pre-mRNA according to its kinase activity; increased expression of the catalytically active form influences splicing to generate the catalytically inactive splicing variant lacking the kinase domain. Leucettine L41 inhibits its kinase activity and affects the regulation of alternative splicing mediated by phosphorylation of SR proteins. Its function is as follows. Dual specificity kinase acting on both serine/threonine and tyrosine-containing substrates. Phosphorylates serine- and arginine-rich (SR) proteins of the spliceosomal complex and may be a constituent of a network of regulatory mechanisms that enable SR proteins to control RNA splicing. Phosphorylates: SRSF1, SRSF3 and PTPN1. Regulates the alternative splicing of tissue factor (F3) pre-mRNA in endothelial cells. This is Dual specificity protein kinase CLK1 from Homo sapiens (Human).